Here is a 584-residue protein sequence, read N- to C-terminus: BEL1-like homeodomain protein 8 (584 aa).

The interval 266 to 282 is SR/KY domain; the sequence is SRFLEPAQKMLEEFCIS. A disordered region spans residues 292-317; it reads ESTSMEDDDDDDDNLSGFSSSSEPLE. Residues 295 to 305 are compositionally biased toward acidic residues; the sequence is SMEDDDDDDDN. The interval 316 to 387 is BELL domain; the sequence is LEPKNRLKKA…ALRTAIAEHV (72 aa). A DNA-binding region (homeobox) is located at residues 424 to 486; it reads IWRPQRGLPE…NARVRLWKPM (63 aa). Residues 503-529 form a disordered region; the sequence is TSHNIEPSNRPNTVSSPSHEQTLTGLS.

It belongs to the TALE/BELL homeobox family. In terms of assembly, may form heterodimeric complex with the TALE/KNOX proteins STM and KNAT1/BP.

Its subcellular location is the nucleus. Functionally, required for specifying floral primordia and establishing early internode patterning events during inflorescence development. This is BEL1-like homeodomain protein 8 (BLH8) from Arabidopsis thaliana (Mouse-ear cress).